We begin with the raw amino-acid sequence, 391 residues long: UPF0229 protein BCG9842_B4751 (391 aa).

The span at 1–16 (MGEENQPNYTISQENW) shows a compositional bias: polar residues. Disordered stretches follow at residues 1-31 (MGEENQPNYTISQENWSLHRKGYDDQQRHQE) and 80-117 (HVGQGNGDSKVGDVVARDGSGGQKQKGPGKGQGAGDAA). The span at 21 to 31 (KGYDDQQRHQE) shows a compositional bias: basic and acidic residues. Over residues 98–115 (GSGGQKQKGPGKGQGAGD) the composition is skewed to gly residues.

Belongs to the UPF0229 family.

This chain is UPF0229 protein BCG9842_B4751, found in Bacillus cereus (strain G9842).